Here is a 250-residue protein sequence, read N- to C-terminus: Tumor necrosis factor ligand superfamily member 13 (250 aa).

Residues 1 to 104 (MPASSPFLLA…ENGERSRKRR (104 aa)) constitute a propeptide that is removed on maturation. Disordered stretches follow at residues 61-82 (EVSR…PWQS) and 89-108 (DALE…AVLT). Residues 116-250 (SVLHLVPINA…HGTFLGFVKL (135 aa)) form the THD domain. Asparagine 124 carries an N-linked (GlcNAc...) asparagine glycan. A disulfide bond links cysteine 196 and cysteine 211.

Belongs to the tumor necrosis factor family. Homotrimer. In terms of processing, the precursor is cleaved by furin. In terms of tissue distribution, expressed at high levels in transformed cell lines, cancers of colon, thyroid, lymphoid tissues and specifically expressed in monocytes and macrophages.

The protein resides in the secreted. Its function is as follows. Cytokine that binds to TNFRSF13B/TACI and to TNFRSF17/BCMA. Plays a role in the regulation of tumor cell growth. May be involved in monocyte/macrophage-mediated immunological processes. This is Tumor necrosis factor ligand superfamily member 13 (TNFSF13) from Homo sapiens (Human).